The primary structure comprises 284 residues: Trimeric intracellular cation channel type B-B (284 aa).

Residues 1–15 (MESLSEVSVQFSQLS) are Lumenal-facing. Residues 16 to 32 (MFPFFDMAHYLASVMSA) form a helical membrane-spanning segment. Residues 33–44 (REQAGALDIASH) lie on the Cytoplasmic side of the membrane. Residues 45-68 (SPMASWFSAMLHCFGGGILSSILL) traverse the membrane as a helical segment. The Lumenal segment spans residues 69–79 (AEPPVGILANT). The chain crosses the membrane as a helical span at residues 80-99 (TNIMLASAIWYMVYYFPYDL). The Cytoplasmic segment spans residues 100–102 (FYN). A helical membrane pass occupies residues 103 to 121 (CFFFLPIRLIAAGMKEVTR). K117 and R121 together coordinate a 1,2-diacyl-sn-glycero-3-phospho-(1D-myo-inositol-4,5-bisphosphate). At 122–139 (TWKILSGITHAHSHYKDA) the chain is on the lumenal side. A helical transmembrane segment spans residues 140-157 (WLVMITIGWARGAGGGLI). The Cytoplasmic portion of the chain corresponds to 158-178 (SNFEQLVRGVWKPESNEFLKM). A helical membrane pass occupies residues 179-196 (SYPVKVTLIGAVLFTLQH). At 197 to 204 (GHYLPISR) the chain is on the lumenal side. Residues 205 to 225 (HNLMFIYTMFLVSIKVTMMLT) form a helical membrane-spanning segment. The Cytoplasmic segment spans residues 226-284 (HSAGSPFLPLETPLHRILFGLRQNQAEVRESPSSSGAKGKPSKKTLDKDSGEQSNKKDK). A disordered region spans residues 250–284 (QAEVRESPSSSGAKGKPSKKTLDKDSGEQSNKKDK). The segment covering 269–284 (KTLDKDSGEQSNKKDK) has biased composition (basic and acidic residues).

Belongs to the TMEM38 family. Homotrimer; conformation seems to be controled by binding to diacylglycerol (DAG).

The protein resides in the endoplasmic reticulum membrane. The catalysed reaction is K(+)(in) = K(+)(out). With respect to regulation, channel activity is activated by increased cytosolic Ca(2+) levels and blocked by luminal high Ca(2+) levels. Its function is as follows. Intracellular monovalent cation channel required for maintenance of rapid intracellular calcium release. Acts as a potassium counter-ion channel that functions in synchronization with calcium release from intracellular stores. Activated by increased cytosolic Ca(2+) levels. This Xenopus laevis (African clawed frog) protein is Trimeric intracellular cation channel type B-B (tmem38b-b).